Here is a 433-residue protein sequence, read N- to C-terminus: Tol-Pal system protein TolB (433 aa).

An N-terminal signal peptide occupies residues methionine 1 to glycine 26.

The protein belongs to the TolB family. The Tol-Pal system is composed of five core proteins: the inner membrane proteins TolA, TolQ and TolR, the periplasmic protein TolB and the outer membrane protein Pal. They form a network linking the inner and outer membranes and the peptidoglycan layer.

The protein resides in the periplasm. Functionally, part of the Tol-Pal system, which plays a role in outer membrane invagination during cell division and is important for maintaining outer membrane integrity. In Methylobacillus flagellatus (strain ATCC 51484 / DSM 6875 / VKM B-1610 / KT), this protein is Tol-Pal system protein TolB.